Consider the following 379-residue polypeptide: Anthranilate O-methyltransferase 3 (379 aa).

Over residues Met-1–His-10 the composition is skewed to basic and acidic residues. The segment at Met-1 to Thr-21 is disordered. Residue Tyr-20 participates in S-adenosyl-L-homocysteine binding. Gln-27 contributes to the anthranilate binding site. Cys-61, Asn-66, Asp-100, Leu-101, Ser-143, and Phe-144 together coordinate S-adenosyl-L-homocysteine. His-164 and Trp-165 together coordinate anthranilate. Glu-265 and Phe-267 together coordinate Mg(2+).

The protein belongs to the methyltransferase superfamily. Type-7 methyltransferase family. SABATH subfamily.

It catalyses the reaction anthranilate + S-adenosyl-L-methionine = O-methyl anthranilate + S-adenosyl-L-homocysteine. The enzyme catalyses benzoate + S-adenosyl-L-methionine = methyl benzoate + S-adenosyl-L-homocysteine. The catalysed reaction is salicylate + S-adenosyl-L-methionine = methyl salicylate + S-adenosyl-L-homocysteine. Its function is as follows. Methyltransferase involved in the biosynthesis of methyl anthranilate in response to stresses. Utilizes anthranilic acid as substrate. Produces exclusively the O-methyl ester. Can also use benzoic acid as substrate. Low activity with salicylic acid. The protein is Anthranilate O-methyltransferase 3 (AAMT3) of Zea mays (Maize).